Here is a 308-residue protein sequence, read N- to C-terminus: C-4 methylsterol oxidase (308 aa).

A helical transmembrane segment spans residues 56 to 76 (LLFFLTHEIFYFGRCLPWAII). The 138-residue stretch at 145–282 (WAVFFVLEDT…FRWWDFILDT (138 aa)) folds into the Fatty acid hydroxylase domain. Residues 160–164 (HRGLH) carry the Histidine box-1 motif. A Histidine box-2 motif is present at residues 173 to 177 (HKQHH). Positions 257 to 263 (HHDEHHH) match the Histidine box-3 motif.

It belongs to the sterol desaturase family. Fe cation is required as a cofactor.

The protein resides in the endoplasmic reticulum membrane. It catalyses the reaction 4,4-dimethyl-5alpha-cholest-7-en-3beta-ol + 6 Fe(II)-[cytochrome b5] + 3 O2 + 5 H(+) = 4alpha-carboxy-4beta-methyl-5alpha-cholest-7-ene-3beta-ol + 6 Fe(III)-[cytochrome b5] + 4 H2O. The protein operates within steroid biosynthesis; zymosterol biosynthesis; zymosterol from lanosterol: step 3/6. C-4 methylsterol oxidase; part of the third module of ergosterol biosynthesis pathway that includes the late steps of the pathway. ERG25 is a catalytic component of the C-4 demethylation complex that catalyzes the conversion of 4,4-dimethylfecosterol into fecosterol via 4-methylfecosterol. Catalyzes the three-step monooxygenation required for the demethylation of 4,4-dimethyl and 4alpha-methylsterols. The third module or late pathway involves the ergosterol synthesis itself through consecutive reactions that mainly occur in the endoplasmic reticulum (ER) membrane. Firstly, the squalene synthase ERG9 catalyzes the condensation of 2 farnesyl pyrophosphate moieties to form squalene, which is the precursor of all steroids. Squalene synthase is crucial for balancing the incorporation of farnesyl diphosphate (FPP) into sterol and nonsterol isoprene synthesis. Secondly, the squalene epoxidase ERG1 catalyzes the stereospecific oxidation of squalene to (S)-2,3-epoxysqualene, which is considered to be a rate-limiting enzyme in steroid biosynthesis. Then, the lanosterol synthase ERG7 catalyzes the cyclization of (S)-2,3 oxidosqualene to lanosterol, a reaction that forms the sterol core. In the next steps, lanosterol is transformed to zymosterol through a complex process involving various demethylation, reduction and desaturation reactions. The lanosterol 14-alpha-demethylase ERG11 (also known as CYP51) catalyzes C14-demethylation of lanosterol to produce 4,4'-dimethyl cholesta-8,14,24-triene-3-beta-ol, which is critical for ergosterol biosynthesis. The C-14 reductase ERG24 reduces the C14=C15 double bond of 4,4-dimethyl-cholesta-8,14,24-trienol to produce 4,4-dimethyl-cholesta-8,24-dienol. 4,4-dimethyl-cholesta-8,24-dienol is substrate of the C-4 demethylation complex ERG25-ERG26-ERG27 in which ERG25 catalyzes the three-step monooxygenation required for the demethylation of 4,4-dimethyl and 4alpha-methylsterols, ERG26 catalyzes the oxidative decarboxylation that results in a reduction of the 3-beta-hydroxy group at the C-3 carbon to an oxo group, and ERG27 is responsible for the reduction of the keto group on the C-3. ERG28 has a role as a scaffold to help anchor ERG25, ERG26 and ERG27 to the endoplasmic reticulum and ERG29 regulates the activity of the iron-containing C4-methylsterol oxidase ERG25. Then, the sterol 24-C-methyltransferase ERG6 catalyzes the methyl transfer from S-adenosyl-methionine to the C-24 of zymosterol to form fecosterol. The C-8 sterol isomerase ERG2 catalyzes the reaction which results in unsaturation at C-7 in the B ring of sterols and thus converts fecosterol to episterol. The sterol-C5-desaturase ERG3 then catalyzes the introduction of a C-5 double bond in the B ring to produce 5-dehydroepisterol. The C-22 sterol desaturase ERG5 further converts 5-dehydroepisterol into ergosta-5,7,22,24(28)-tetraen-3beta-ol by forming the C-22(23) double bond in the sterol side chain. Finally, ergosta-5,7,22,24(28)-tetraen-3beta-ol is substrate of the C-24(28) sterol reductase ERG4 to produce ergosterol. The protein is C-4 methylsterol oxidase of Candida albicans (strain SC5314 / ATCC MYA-2876) (Yeast).